The sequence spans 90 residues: U7-theraphotoxin-Hhn1a 3 (90 aa).

Positions 1–26 (MKTAIFTVVLALAVFAVLSFGWEANG) are cleaved as a signal peptide. The propeptide occupies 27–50 (KALSEEFTELIHEKEAASETEARE). Disulfide bonds link C51–C65, C58–C70, and C64–C81.

The protein belongs to the neurotoxin 10 (Hwtx-1) family. 13 (Hntx-13) subfamily. As to expression, expressed by the venom gland.

It localises to the secreted. In terms of biological role, ion channel inhibitor. The protein is U7-theraphotoxin-Hhn1a 3 of Cyriopagopus hainanus (Chinese bird spider).